Reading from the N-terminus, the 177-residue chain is Thymidine kinase (177 aa).

Position 11-18 (11-18 (GPMFSGKS)) interacts with ATP. Residue Glu-83 is the Proton acceptor of the active site. Phe-113 provides a ligand contact to substrate. Zn(2+) is bound by residues Cys-138 and Cys-141. 157–161 (IEIIG) serves as a coordination point for substrate. Residues Cys-170 and Cys-173 each coordinate Zn(2+).

Belongs to the thymidine kinase family. Homotetramer. Two molecules of substrate bind to each enzyme tetramer.

It carries out the reaction thymidine + ATP = dTMP + ADP + H(+). In terms of biological role, phosphorylates thymidine and thymidine analogs, such as azidothymidine (AZT). Part of the salvage pathway for pyrimidine deoxyribonucleotide synthesis. The sequence is that of Thymidine kinase (OPG101) from Vaccinia virus (strain Copenhagen) (VACV).